We begin with the raw amino-acid sequence, 367 residues long: Glutamate 5-kinase (367 aa).

Lys-10 is an ATP binding site. Residues Ser-50, Asp-137, and Asn-149 each contribute to the substrate site. Residues 169-170 (TD) and 211-217 (TGGMATK) contribute to the ATP site. In terms of domain architecture, PUA spans 275-353 (AGELVVDDGA…QQIGEILGYE (79 aa)).

Belongs to the glutamate 5-kinase family.

The protein resides in the cytoplasm. It catalyses the reaction L-glutamate + ATP = L-glutamyl 5-phosphate + ADP. Its pathway is amino-acid biosynthesis; L-proline biosynthesis; L-glutamate 5-semialdehyde from L-glutamate: step 1/2. Functionally, catalyzes the transfer of a phosphate group to glutamate to form L-glutamate 5-phosphate. This chain is Glutamate 5-kinase, found in Erwinia tasmaniensis (strain DSM 17950 / CFBP 7177 / CIP 109463 / NCPPB 4357 / Et1/99).